Here is an 82-residue protein sequence, read N- to C-terminus: Small ribosomal subunit protein bS18 (82 aa).

A compositionally biased stretch (polar residues) spans M1–R10. The segment at M1–P21 is disordered.

This sequence belongs to the bacterial ribosomal protein bS18 family. Part of the 30S ribosomal subunit. Forms a tight heterodimer with protein bS6.

Its function is as follows. Binds as a heterodimer with protein bS6 to the central domain of the 16S rRNA, where it helps stabilize the platform of the 30S subunit. The polypeptide is Small ribosomal subunit protein bS18 (Bartonella tribocorum (strain CIP 105476 / IBS 506)).